Here is a 278-residue protein sequence, read N- to C-terminus: Sulfur carrier protein FdhD (278 aa).

Catalysis depends on Cys-124, which acts as the Cysteine persulfide intermediate.

The protein belongs to the FdhD family.

It is found in the cytoplasm. Functionally, required for formate dehydrogenase (FDH) activity. Acts as a sulfur carrier protein that transfers sulfur from IscS to the molybdenum cofactor prior to its insertion into FDH. This chain is Sulfur carrier protein FdhD, found in Burkholderia cenocepacia (strain ATCC BAA-245 / DSM 16553 / LMG 16656 / NCTC 13227 / J2315 / CF5610) (Burkholderia cepacia (strain J2315)).